Reading from the N-terminus, the 376-residue chain is Arsenite methyltransferase (376 aa).

2 positions are modified to phosphoserine: Ser47 and Ser336. Residues 354–363 are compositionally biased toward basic and acidic residues; sequence SDKMKPRHAP. The tract at residues 354–376 is disordered; sequence SDKMKPRHAPEGTGGCCGKRKNC.

It belongs to the methyltransferase superfamily. Arsenite methyltransferase family.

It is found in the cytoplasm. It localises to the cytosol. It carries out the reaction arsenic triglutathione + [thioredoxin]-dithiol + S-adenosyl-L-methionine + 2 H2O = methylarsonous acid + [thioredoxin]-disulfide + 3 glutathione + S-adenosyl-L-homocysteine + H(+). The catalysed reaction is arsenic triglutathione + 2 [thioredoxin]-dithiol + 2 S-adenosyl-L-methionine + H2O = dimethylarsinous acid + 2 [thioredoxin]-disulfide + 3 glutathione + 2 S-adenosyl-L-homocysteine + 2 H(+). The enzyme catalyses arsenic triglutathione + 3 [thioredoxin]-dithiol + 3 S-adenosyl-L-methionine = trimethylarsine + 3 [thioredoxin]-disulfide + 3 glutathione + 3 S-adenosyl-L-homocysteine + 3 H(+). Functionally, catalyzes the transfer of a methyl group from AdoMet to trivalent arsenicals producing methylated and dimethylated arsenicals. It methylates arsenite to form methylarsonate, Me-AsO(3)H(2), which is reduced by methylarsonate reductase to methylarsonite, Me-As(OH)2. Methylarsonite is also a substrate and it is converted into the much less toxic compound dimethylarsinate (cacodylate), Me(2)As(O)-OH. This chain is Arsenite methyltransferase (As3mt), found in Mus musculus (Mouse).